The chain runs to 182 residues: Oligoribonuclease (182 aa).

Residues Leu8 to Leu171 enclose the Exonuclease domain. Residue Tyr129 is part of the active site.

Belongs to the oligoribonuclease family.

It localises to the cytoplasm. 3'-to-5' exoribonuclease specific for small oligoribonucleotides. The chain is Oligoribonuclease from Actinobacillus succinogenes (strain ATCC 55618 / DSM 22257 / CCUG 43843 / 130Z).